The primary structure comprises 294 residues: 33 kDa chaperonin (294 aa).

Disulfide bonds link cysteine 239–cysteine 241 and cysteine 272–cysteine 275.

The protein belongs to the HSP33 family. Post-translationally, under oxidizing conditions two disulfide bonds are formed involving the reactive cysteines. Under reducing conditions zinc is bound to the reactive cysteines and the protein is inactive.

Its subcellular location is the cytoplasm. Redox regulated molecular chaperone. Protects both thermally unfolding and oxidatively damaged proteins from irreversible aggregation. Plays an important role in the bacterial defense system toward oxidative stress. The polypeptide is 33 kDa chaperonin (Listeria monocytogenes serotype 4a (strain HCC23)).